A 287-amino-acid chain; its full sequence is Lectin 10 (287 aa).

The Cytoplasmic segment spans residues 1–11; the sequence is MALSNLKSNRT. A helical transmembrane segment spans residues 12-31; the sequence is LSSSLITIFIISLFLQYHNI. Over 32 to 287 the chain is Extracellular; the sequence is KSQSSWQSRQ…IINWSFESAL (256 aa). Asn124, Asn147, Asn243, and Asn280 each carry an N-linked (GlcNAc...) asparagine glycan.

This sequence belongs to the leguminous lectin family.

The protein resides in the membrane. May be involved in arbuscular mycorrhizal (AM) symbiosis with AM fungi. This is Lectin 10 from Medicago truncatula (Barrel medic).